The chain runs to 387 residues: Phosphoglycerate kinase (387 aa).

Residues 21 to 23 (DLN), arginine 36, 59 to 62 (HLGR), arginine 113, and arginine 146 each bind substrate. ATP is bound by residues lysine 197, glutamate 314, and 340-343 (GGDT).

The protein belongs to the phosphoglycerate kinase family. Monomer.

It localises to the cytoplasm. It carries out the reaction (2R)-3-phosphoglycerate + ATP = (2R)-3-phospho-glyceroyl phosphate + ADP. It functions in the pathway carbohydrate degradation; glycolysis; pyruvate from D-glyceraldehyde 3-phosphate: step 2/5. This chain is Phosphoglycerate kinase, found in Photorhabdus luminescens (Xenorhabdus luminescens).